We begin with the raw amino-acid sequence, 567 residues long: Urease subunit alpha (567 aa).

Residues 129–567 enclose the Urease domain; that stretch reads GGVDTHIHFI…LPMAQRYFLF (439 aa). Positions 134, 136, and 217 each coordinate Ni(2+). Lysine 217 carries the post-translational modification N6-carboxylysine. Histidine 219 lines the substrate pocket. The Ni(2+) site is built by histidine 246 and histidine 272. The active-site Proton donor is the histidine 320. Ni(2+) is bound at residue aspartate 360.

Belongs to the metallo-dependent hydrolases superfamily. Urease alpha subunit family. As to quaternary structure, heterotrimer of UreA (gamma), UreB (beta) and UreC (alpha) subunits. Three heterotrimers associate to form the active enzyme. Ni cation is required as a cofactor. Carboxylation allows a single lysine to coordinate two nickel ions.

It localises to the cytoplasm. The enzyme catalyses urea + 2 H2O + H(+) = hydrogencarbonate + 2 NH4(+). Its pathway is nitrogen metabolism; urea degradation; CO(2) and NH(3) from urea (urease route): step 1/1. In Aliivibrio fischeri (strain MJ11) (Vibrio fischeri), this protein is Urease subunit alpha.